A 577-amino-acid polypeptide reads, in one-letter code: Monooxygenase PC-14 (577 aa).

The protein belongs to the FMO family. FAD is required as a cofactor.

It functions in the pathway secondary metabolite biosynthesis. Functionally, monooxygenase; part of the gene cluster that mediates the biosynthesis of the indole diterpenes penitrems. The geranylgeranyl diphosphate (GGPP) synthase penG catalyzes the first step in penitrem biosynthesis via conversion of farnesyl pyrophosphate and isopentyl pyrophosphate into geranylgeranyl pyrophosphate (GGPP). Condensation of indole-3-glycerol phosphate with GGPP by the prenyl transferase penC then forms 3-geranylgeranylindole (3-GGI). Epoxidation by the FAD-dependent monooxygenase penM leads to a epoxidized-GGI that is substrate of the terpene cyclase penB for cyclization to yield paspaline. Paspaline is subsequently converted to 13-desoxypaxilline by the cytochrome P450 monooxygenase penP, the latter being then converted to paxilline by the cytochrome P450 monooxygenase penQ. Paxilline is converted to beta-paxitriol via C-10 ketoreduction by the short-chain dehydrogenase PC-15 which can be monoprenylated at the C-20 by the indole diterpene prenyltransferase penD. A two-step elimination (acetylation and elimination) process performed by the O-acetyltransferase PC-16 and the P.simplicissimum ptmI-ortholog not yet identified in P.crustosum, leads to the production of the prenylated form of penijanthine. The FAD-linked oxidoreductase ptmO then converts the prenylated form of penijanthine into PC-M5 which is in turn transformed into PC-M4 by the aromatic dimethylallyltransferase PC-22. A series of oxidation steps involving 4 cytochrome P450 monooxygenases (PC-21, PC-05, PC-23, PC-20) and a FAD-dependent monooxygenase (PC-14) are required for the transformation of PC-M4 to penitrems A and E. Synthesis of these final products is proposed to proceed via penitrems D and C (PC-21, PC-05, PC-14) and penitrems B and F (PC-21, PC-05, PC-14, PC-23). The chain is Monooxygenase PC-14 from Penicillium crustosum (Blue mold fungus).